A 616-amino-acid polypeptide reads, in one-letter code: Dihydroxy-acid dehydratase (616 aa).

Asp-81 is a Mg(2+) binding site. Cys-122 contacts [2Fe-2S] cluster. Mg(2+) contacts are provided by Asp-123 and Lys-124. Residue Lys-124 is modified to N6-carboxylysine. Cys-195 lines the [2Fe-2S] cluster pocket. Glu-491 is a binding site for Mg(2+). Ser-517 acts as the Proton acceptor in catalysis.

It belongs to the IlvD/Edd family. Homodimer. It depends on [2Fe-2S] cluster as a cofactor. Requires Mg(2+) as cofactor.

The catalysed reaction is (2R)-2,3-dihydroxy-3-methylbutanoate = 3-methyl-2-oxobutanoate + H2O. The enzyme catalyses (2R,3R)-2,3-dihydroxy-3-methylpentanoate = (S)-3-methyl-2-oxopentanoate + H2O. Its pathway is amino-acid biosynthesis; L-isoleucine biosynthesis; L-isoleucine from 2-oxobutanoate: step 3/4. The protein operates within amino-acid biosynthesis; L-valine biosynthesis; L-valine from pyruvate: step 3/4. Functions in the biosynthesis of branched-chain amino acids. Catalyzes the dehydration of (2R,3R)-2,3-dihydroxy-3-methylpentanoate (2,3-dihydroxy-3-methylvalerate) into 2-oxo-3-methylpentanoate (2-oxo-3-methylvalerate) and of (2R)-2,3-dihydroxy-3-methylbutanoate (2,3-dihydroxyisovalerate) into 2-oxo-3-methylbutanoate (2-oxoisovalerate), the penultimate precursor to L-isoleucine and L-valine, respectively. This chain is Dihydroxy-acid dehydratase, found in Shigella boydii serotype 4 (strain Sb227).